Reading from the N-terminus, the 241-residue chain is ATP synthase subunit a (241 aa).

A run of 5 helical transmembrane segments spans residues 30–50 (GQVF…VVVG), 91–111 (FIGT…LIPW), 128–148 (INTT…AGLS), 193–213 (LVVA…VMFL), and 214–234 (GLFT…YYIG).

This sequence belongs to the ATPase A chain family. In terms of assembly, F-type ATPases have 2 components, CF(1) - the catalytic core - and CF(0) - the membrane proton channel. CF(1) has five subunits: alpha(3), beta(3), gamma(1), delta(1), epsilon(1). CF(0) has four main subunits: a, b, b' and c.

It is found in the cellular thylakoid membrane. Its function is as follows. Key component of the proton channel; it plays a direct role in the translocation of protons across the membrane. The polypeptide is ATP synthase subunit a (Prochlorococcus marinus (strain SARG / CCMP1375 / SS120)).